The sequence spans 134 residues: Secretin (134 aa).

The first 21 residues, 1–21 (MATRALLLLLLLPPLLLLAGC), serve as a signal peptide directing secretion. Residues 22 to 31 (AARPAPPRAP) constitute a propeptide that is removed on maturation. At Val-59 the chain carries Valine amide. Phosphoserine is present on Ser-63. Residues 63–134 (SQQDPENNTA…PAAEGSPMPP (72 aa)) constitute a propeptide that is removed on maturation.

This sequence belongs to the glucagon family.

The protein localises to the secreted. Functionally, hormone involved in different processes, such as regulation of the pH of the duodenal content, food intake and water homeostasis. Exerts its biological effects by binding to secretin receptor (SCTR), a G-protein coupled receptor expressed in the basolateral domain of several cells. Acts as a key gastrointestinal hormone by regulating the pH of the duodenal content. Secreted by S cells of the duodenum in the crypts of Lieberkuehn and regulates the pH of the duodenum by (1) inhibiting the secretion of gastric acid from the parietal cells of the stomach and (2) stimulating the production of bicarbonate (NaHCO(3)) from the ductal cells of the pancreas. Production of bicarbonate is essential to neutralize the pH and ensure no damage is done to the small intestine by the gastric acid. In addition to regulating the pH of the duodenal content, plays a central role in diet induced thermogenesis: acts as a non-sympathetic brown fat (BAT) activator mediating prandial thermogenesis, which consequentially induces satiation. Mechanistically, secretin released by the gut after a meal binds to secretin receptor (SCTR) in brown adipocytes, activating brown fat thermogenesis by stimulating lipolysis, which is sensed in the brain and promotes satiation. Also able to stimulate lipolysis in white adipocytes. Also plays an important role in cellular osmoregulation: released into the systemic circulation in response to hyperosmolality and acts at different levels in the hypothalamus, pituitary and kidney to regulate water homeostasis. Also plays a role in the central nervous system, possibly by acting as a neuropeptide hormone: required for hippocampal synaptic function and neural progenitor cells maintenance. The sequence is that of Secretin from Sus scrofa (Pig).